A 510-amino-acid chain; its full sequence is Lysine--tRNA ligase (510 aa).

The Mg(2+) site is built by glutamate 420 and glutamate 427.

It belongs to the class-II aminoacyl-tRNA synthetase family. As to quaternary structure, homodimer. Requires Mg(2+) as cofactor.

It is found in the cytoplasm. The catalysed reaction is tRNA(Lys) + L-lysine + ATP = L-lysyl-tRNA(Lys) + AMP + diphosphate. The protein is Lysine--tRNA ligase of Vibrio vulnificus (strain YJ016).